Here is a 417-residue protein sequence, read N- to C-terminus: Adrenocortical dysplasia protein homolog (417 aa).

Positions 11 to 13 (PWI) match the PWI motif. A Phosphoserine modification is found at serine 25. Residues 156 to 245 (ESASSSAGLT…SSIDSSQKAQ (90 aa)) form an interaction with POT1 region. Composition is skewed to polar residues over residues 237 to 250 (SIDS…NPAS) and 259 to 292 (SGAS…TSPR). The segment at 237 to 309 (SIDSSQKAQE…PCSSTPSSPL (73 aa)) is disordered. A compositionally biased stretch (low complexity) spans 296–309 (PSSTPCSSTPSSPL). Phosphoserine is present on residues serine 313 and serine 317. Lysine 348 is covalently cross-linked (Glycyl lysine isopeptide (Lys-Gly) (interchain with G-Cter in SUMO2)).

Component of the shelterin complex (telosome) composed of TERF1, TERF2, TINF2, TERF2IP ACD and POT1. Forms heterodimers with POT1. Identified in a complex with POT1 and single-stranded telomeric DNA. Interacts with STN1 and TINF2.

Its subcellular location is the nucleus. It localises to the chromosome. It is found in the telomere. In terms of biological role, component of the shelterin complex (telosome) that is involved in the regulation of telomere length and protection. Shelterin associates with arrays of double-stranded TTAGGG repeats added by telomerase and protects chromosome ends. Without its protective activity, telomeres are no longer hidden from the DNA damage surveillance and chromosome ends are inappropriately processed by DNA repair pathways. Promotes binding of POT1 to single-stranded telomeric DNA. Modulates the inhibitory effects of POT1 on telomere elongation. The ACD-POT1 heterodimer enhances telomere elongation by recruiting telomerase to telomeres and increasing its processivity. May play a role in organogenesis. This is Adrenocortical dysplasia protein homolog from Rattus norvegicus (Rat).